Consider the following 413-residue polypeptide: Docking protein 2 (413 aa).

Residues 4 to 114 (VVVKQGFLYL…WIQAICLLAF (111 aa)) form the PH domain. Residues 147–252 (PQKEFAVTVR…SAQKNAAPPG (106 aa)) form the IRS-type PTB domain. The segment at 247–292 (NAAPPGPQTQPVPVPAVLPRPESPYARPHDSLPPPSPTVPVPTPRQ) is disordered. The span at 250 to 268 (PPGPQTQPVPVPAVLPRPE) shows a compositional bias: pro residues. Position 271 is a phosphotyrosine (Tyr271). The span at 277–289 (SLPPPSPTVPVPT) shows a compositional bias: pro residues. Residues Tyr300 and Tyr346 each carry the phosphotyrosine modification. Residues 362–381 (QEPRGEAWRRQATADRDSSG) are compositionally biased toward basic and acidic residues. Residues 362-383 (QEPRGEAWRRQATADRDSSGLK) form a disordered region.

The protein belongs to the DOK family. Type A subfamily. In terms of assembly, interacts with phosphorylated RASGAP and EGFR. Interacts with RET and NCK. Interacts (via PH domain) with TEK/TIE2 (tyrosine phosphorylated). In terms of processing, on immunoreceptor stimulation, phosphorylated on C-terminal tyrosine residues. Phosphorylation on Tyr-346 is required for binding to the SH2 domain of NCK. Phosphorylation on both Tyr-271 and Tyr-300 is required for interaction with RASGAP. Phosphorylated on tyrosine residues by TEK/TIE2.

Functionally, DOK proteins are enzymatically inert adaptor or scaffolding proteins. They provide a docking platform for the assembly of multimolecular signaling complexes. DOK2 may modulate the cellular proliferation induced by IL-4, as well as IL-2 and IL-3. May be involved in modulating Bcr-Abl signaling. Attenuates EGF-stimulated MAP kinase activation. The sequence is that of Docking protein 2 (DOK2) from Bos taurus (Bovine).